A 327-amino-acid polypeptide reads, in one-letter code: Aldo-keto reductase family 1 member A1 (327 aa).

Residues 13-22, threonine 23, tryptophan 24, and aspartate 47 each bind NADP(+); that span reads GQKIPLIGLG. Residue tyrosine 52 is the Proton donor of the active site. Serine 164, asparagine 165, serine 213, leucine 215, serine 217, lysine 265, serine 266, valine 267, threonine 268, arginine 271, glutamine 274, and asparagine 275 together coordinate NADP(+).

Belongs to the aldo/keto reductase family.

The protein localises to the cytoplasm. Its subcellular location is the cytosol. The protein resides in the apical cell membrane. The catalysed reaction is a primary alcohol + NADP(+) = an aldehyde + NADPH + H(+). It carries out the reaction S-nitroso-CoA + NADPH + H(+) = sulfinamide-CoA + NADP(+). The enzyme catalyses S-nitrosoglutathione + NADPH + H(+) = S-(hydroxysulfenamide)glutathione + NADP(+). Functionally, catalyzes the NADPH-dependent reduction of a wide variety of carbonyl-containing compounds to their corresponding alcohols. Displays enzymatic activity towards endogenous metabolites such as aromatic and aliphatic aldehydes, ketones, monosaccharides and bile acids. Acts as an aldehyde-detoxification enzyme. Also acts as an inhibitor of protein S-nitrosylation by mediating degradation of S-nitroso-coenzyme A (S-nitroso-CoA), a cofactor required to S-nitrosylate proteins. Also acts as a S-nitroso-glutathione reductase by catalyzing the NADPH-dependent reduction of S-nitrosoglutathione. Displays no reductase activity towards retinoids. The sequence is that of Aldo-keto reductase family 1 member A1 (AKR1A1) from Gallus gallus (Chicken).